Consider the following 558-residue polypeptide: MAELNTHVNVKEKIYAVRSVVPNKSNNEIVLVLQQFDFNVDKAVQAFVDGSAIQVLKEWNMTGKKKNNKRKRSKSKQHQGNKDAKDKVERPEAGPLQPQPPQIQNGPMNGCEKDSSSTDSANEKPALIPREKKISILEEPSKALRGVTEGNRLLQQKLSLDGNPKPIHGTTERSDGLQWSAEQPCNPSKPKAKTSPVKSNTPAAHLEIKPDELAKKRGPNIEKSVKDLQRCTVSLTRYRVMIKEEVDSSVKKIKAAFAELHNCIIDKEVSLMAEMDKVKEEAMEILTARQKKAEELKRLTDLASQMAEMQLAELRAEIKHFVSERKYDEELGKAARFSCDIEQLKAQIMLCGEITHPKNNYSSRTPCSSLLPLLNAHAATSGKQSNFSRKSSTHNKPSEGKAANPKMVSSLPSTADPSHQTMPANKQNGSSNQRRRFNPQYHNNRLNGPAKSQGSGNEAEPLGKGNSRHEHRRQPHNGFRPKNKGGAKNQEASLGMKTPEAPAHSEKPRRRQHAADTSEARPFRGSVGRVSQCNLCPTRIEVSTDAAVLSVPAVTLVA.

The residue at position 2 (Ala2) is an N-acetylalanine. Basic residues predominate over residues Gly63 to Gln79. Disordered stretches follow at residues Gly63–Ile134 and Lys157–Thr201. The span at Gly80–Glu92 shows a compositional bias: basic and acidic residues. A Phosphoserine modification is found at Ser120. A coiled-coil region spans residues Leu271–Leu344. Positions Thr380–Gly525 are disordered. Composition is skewed to polar residues over residues Ser381–Lys390, Ser410–Asn432, and Gln440–Gly456. Phosphoserine is present on Ser455. Basic residues predominate over residues His469–Gly485. Positions His513 to Pro522 are enriched in basic and acidic residues.

This sequence belongs to the SPATS2 family.

It is found in the cytoplasm. The protein resides in the nucleus. The protein localises to the nucleolus. This is SPATS2-like protein (SPATS2L) from Homo sapiens (Human).